The chain runs to 126 residues: Large ribosomal subunit protein bL12 (126 aa).

The protein belongs to the bacterial ribosomal protein bL12 family. In terms of assembly, homodimer. Part of the ribosomal stalk of the 50S ribosomal subunit. Forms a multimeric L10(L12)X complex, where L10 forms an elongated spine to which 2 to 4 L12 dimers bind in a sequential fashion. Binds GTP-bound translation factors.

In terms of biological role, forms part of the ribosomal stalk which helps the ribosome interact with GTP-bound translation factors. Is thus essential for accurate translation. The sequence is that of Large ribosomal subunit protein bL12 from Citrifermentans bemidjiense (strain ATCC BAA-1014 / DSM 16622 / JCM 12645 / Bem) (Geobacter bemidjiensis).